Here is a 456-residue protein sequence, read N- to C-terminus: RUN domain-containing protein 3B (456 aa).

The disordered stretch occupies residues 1–26 (MASRSLGGLSGIRGGGGGGGKKSLSS). Residues 8-21 (GLSGIRGGGGGGGK) show a composition bias toward gly residues. Arg13 is subject to Omega-N-methylarginine. The region spanning 57–189 (DDSSPEFNNF…IDFSFCLKGE (133 aa)) is the RUN domain. Ser215 and Ser216 each carry phosphoserine. Positions 300-325 (AHKLEKEQLEYIIVELQDQLTVLKNN) form a coiled coil. Residues 382-405 (SLSQTSLDPGQSQEGDGKQDTLNI) are disordered.

It belongs to the RUNDC3 family. Interacts with RAP2A.

The polypeptide is RUN domain-containing protein 3B (RUNDC3B) (Macaca fascicularis (Crab-eating macaque)).